The chain runs to 291 residues: Elongation factor Ts (291 aa).

Residues 79–82 (TDFV) form an involved in Mg(2+) ion dislocation from EF-Tu region.

The protein belongs to the EF-Ts family.

The protein localises to the cytoplasm. Its function is as follows. Associates with the EF-Tu.GDP complex and induces the exchange of GDP to GTP. It remains bound to the aminoacyl-tRNA.EF-Tu.GTP complex up to the GTP hydrolysis stage on the ribosome. The polypeptide is Elongation factor Ts (Ruegeria sp. (strain TM1040) (Silicibacter sp.)).